A 223-amino-acid chain; its full sequence is Urease accessory protein UreF (223 aa).

It belongs to the UreF family. As to quaternary structure, ureD, UreF and UreG form a complex that acts as a GTP-hydrolysis-dependent molecular chaperone, activating the urease apoprotein by helping to assemble the nickel containing metallocenter of UreC. The UreE protein probably delivers the nickel.

It is found in the cytoplasm. Required for maturation of urease via the functional incorporation of the urease nickel metallocenter. This Pseudomonas paraeruginosa (strain DSM 24068 / PA7) (Pseudomonas aeruginosa (strain PA7)) protein is Urease accessory protein UreF.